Consider the following 445-residue polypeptide: C4-dicarboxylate transport protein (445 aa).

The next 8 helical transmembrane spans lie at 17 to 37, 56 to 76, 91 to 111, 157 to 177, 200 to 220, 233 to 253, 319 to 339, and 367 to 387; these read FYQI…LLGY, LVKM…IAAM, VYFL…SHIV, FVGG…LSLA, LVAI…AFTI, MLVG…LGMV, IYMT…LSLG, and AATL…ILGV.

This sequence belongs to the dicarboxylate/amino acid:cation symporter (DAACS) (TC 2.A.23) family.

The protein localises to the cell inner membrane. Responsible for the transport of dicarboxylates such as succinate, fumarate, and malate from the periplasm across the membrane. In Bordetella avium (strain 197N), this protein is C4-dicarboxylate transport protein.